A 962-amino-acid polypeptide reads, in one-letter code: Glycine dehydrogenase (decarboxylating) (962 aa).

The residue at position 709 (K709) is an N6-(pyridoxal phosphate)lysine.

Belongs to the GcvP family. In terms of assembly, the glycine cleavage system is composed of four proteins: P, T, L and H. Requires pyridoxal 5'-phosphate as cofactor.

The enzyme catalyses N(6)-[(R)-lipoyl]-L-lysyl-[glycine-cleavage complex H protein] + glycine + H(+) = N(6)-[(R)-S(8)-aminomethyldihydrolipoyl]-L-lysyl-[glycine-cleavage complex H protein] + CO2. The glycine cleavage system catalyzes the degradation of glycine. The P protein binds the alpha-amino group of glycine through its pyridoxal phosphate cofactor; CO(2) is released and the remaining methylamine moiety is then transferred to the lipoamide cofactor of the H protein. This chain is Glycine dehydrogenase (decarboxylating), found in Shewanella oneidensis (strain ATCC 700550 / JCM 31522 / CIP 106686 / LMG 19005 / NCIMB 14063 / MR-1).